The chain runs to 149 residues: Large ribosomal subunit protein bL9 (149 aa).

The protein belongs to the bacterial ribosomal protein bL9 family.

In terms of biological role, binds to the 23S rRNA. The protein is Large ribosomal subunit protein bL9 of Magnetococcus marinus (strain ATCC BAA-1437 / JCM 17883 / MC-1).